The primary structure comprises 650 residues: Acetyl-coenzyme A synthetase (650 aa).

CoA contacts are provided by residues 191–194, T311, and N335; that span reads RGGR. ATP contacts are provided by residues 387–389, 411–416, D500, and R515; these read GEP and DTWWQT. S523 serves as a coordination point for CoA. Residue R526 coordinates ATP. Residues V537, H539, and V542 each coordinate Mg(2+). R584 lines the CoA pocket. K609 carries the post-translational modification N6-acetyllysine.

Belongs to the ATP-dependent AMP-binding enzyme family. The cofactor is Mg(2+). Post-translationally, acetylated. Deacetylation by the SIR2-homolog deacetylase activates the enzyme.

It carries out the reaction acetate + ATP + CoA = acetyl-CoA + AMP + diphosphate. Its function is as follows. Catalyzes the conversion of acetate into acetyl-CoA (AcCoA), an essential intermediate at the junction of anabolic and catabolic pathways. AcsA undergoes a two-step reaction. In the first half reaction, AcsA combines acetate with ATP to form acetyl-adenylate (AcAMP) intermediate. In the second half reaction, it can then transfer the acetyl group from AcAMP to the sulfhydryl group of CoA, forming the product AcCoA. The sequence is that of Acetyl-coenzyme A synthetase from Shewanella sp. (strain MR-7).